The primary structure comprises 119 residues: Protein phosphatase EYA1 (119 aa).

The protein belongs to the HAD-like hydrolase superfamily. EYA family. Requires Mg(2+) as cofactor.

It is found in the cytoplasm. The protein resides in the nucleus. The enzyme catalyses O-phospho-L-tyrosyl-[protein] + H2O = L-tyrosyl-[protein] + phosphate. It catalyses the reaction O-phospho-L-seryl-[protein] + H2O = L-seryl-[protein] + phosphate. It carries out the reaction O-phospho-L-threonyl-[protein] + H2O = L-threonyl-[protein] + phosphate. In terms of biological role, functions both as protein phosphatase and as transcriptional coactivator for SIX1, and probably also for other transcription factors of this family. Tyrosine phosphatase that dephosphorylates 'Tyr-142' of histone H2AX (H2AXY142ph) and promotes efficient DNA repair via the recruitment of DNA repair complexes containing MDC1. 'Tyr-142' phosphorylation of histone H2AX plays a central role in DNA repair and acts as a mark that distinguishes between apoptotic and repair responses to genotoxic stress. Its function as histone phosphatase may contribute to its function in transcription regulation during organogenesis. Also has phosphatase activity with proteins phosphorylated on Ser and Thr residues (in vitro). Required for normal embryonic development of the skeleton, kidneys and ears. This is Protein phosphatase EYA1 (EYA1) from Gallus gallus (Chicken).